An 830-amino-acid polypeptide reads, in one-letter code: Isethionate sulfite-lyase (830 aa).

Residues 31 to 700 form the PFL domain; that stretch reads KRVFKLLERF…VVSATPNGRV (670 aa). Residues Arg189, Gln193, 468–470, and Arg678 each bind 2-hydroxyethane-1-sulfonate; that span reads CIE. Cys468 acts as the Cysteine radical intermediate in catalysis. Residue Glu470 is the Proton acceptor of the active site. In terms of domain architecture, Glycine radical spans 707 to 830; sequence DGSSPSHGAD…LIARTGHDQM (124 aa). Glycine radical is present on Gly805.

It belongs to the glycyl radical enzyme (GRE) family. Homodimer. Requires the activating protein IslB to generate the key active site glycyl radical on Gly-805 that is involved in catalysis.

The enzyme catalyses 2-hydroxyethane-1-sulfonate = acetaldehyde + sulfite + H(+). Its pathway is organosulfur degradation; alkanesulfonate degradation. In terms of biological role, involved in an anaerobic respiration pathway that converts the sulfonate taurine (2-aminoethanesulfonate) to ammonia, acetate and sulfide. Catalyzes the radical-mediated C-S bond cleavage of isethionate (2-hydroxyethanesulfonate) to form sulfite and acetaldehyde. Is not able to use any alternate organosulfonate or (S)-1,2-propanediol or choline as a substrate, showing that this enzyme is highly specific for isethionate. The sequence is that of Isethionate sulfite-lyase from Bilophila wadsworthia (strain 3_1_6).